The chain runs to 233 residues: Small ribosomal subunit protein uS2 (233 aa).

This sequence belongs to the universal ribosomal protein uS2 family.

This Bacillus mycoides (strain KBAB4) (Bacillus weihenstephanensis) protein is Small ribosomal subunit protein uS2.